A 416-amino-acid chain; its full sequence is Formyl-CoA:oxalate CoA-transferase (416 aa).

CoA-binding positions include 17–18 (QS), arginine 38, 72–75 (LNTK), 96–98 (NFH), histidine 104, and 137–140 (KAYE). Catalysis depends on aspartate 169, which acts as the Nucleophile. 248 to 250 (GGQ) serves as a coordination point for substrate. 273–275 (QEQ) contacts CoA.

The protein belongs to the CoA-transferase III family. Frc subfamily. As to quaternary structure, homodimer.

It carries out the reaction formyl-CoA + oxalate = oxalyl-CoA + formate. It functions in the pathway metabolic intermediate degradation; oxalate degradation; CO(2) and formate from oxalate: step 1/2. Its function is as follows. Involved in the catabolism of oxalate and in the adapatation to low pH via the induction of the oxalate-dependent acid tolerance response (ATR). Catalyzes the transfer of the CoA moiety from formyl-CoA to oxalate. This is Formyl-CoA:oxalate CoA-transferase from Escherichia coli O6:H1 (strain CFT073 / ATCC 700928 / UPEC).